The following is a 168-amino-acid chain: Bcl2-associated agonist of cell death (168 aa).

Met-1 is subject to N-acetylmethionine. The disordered stretch occupies residues 1–105 (MFQIPEFEPS…RSRSAPPNLW (105 aa)). A Phosphoserine modification is found at Ser-25. A compositionally biased stretch (polar residues) spans 49–60 (SHQQEQPTSSSH). Residues Ser-75 and Ser-91 each carry the phosphoserine modification. Residues Arg-94 and Arg-96 each carry the asymmetric dimethylarginine; by PRMT1 modification. Ser-97 carries the post-translational modification Phosphoserine. Ser-99 is modified (phosphoserine; by PKA, PKB, PAK1, RPS6KA1, RPS6KB1 and PKC/PRKCQ). The residue at position 99 (Ser-99) is a Phosphoserine; by PKB/AKT1. A BH3 motif is present at residues 110–124 (YGRELRRMSDEFVDS). Phosphoserine occurs at positions 118 and 134. A disordered region spans residues 125-145 (FKKGLPRPKSAGTATQMRQSS). The segment covering 136-145 (GTATQMRQSS) has biased composition (polar residues). Arg-161 carries the omega-N-methylarginine modification.

It belongs to the Bcl-2 family. In terms of assembly, forms heterodimers with the anti-apoptotic proteins, Bcl-X(L), Bcl-2 and Bcl-W. Also binds protein S100A10. The Ser-75/Ser-99 phosphorylated form binds 14-3-3 proteins. Interacts with AKT1 and PIM3. Interacts (via BH3 domain) with NOL3 (via CARD domain); preventing the association of BAD with BCL2. Interacts with HIF3A (via C-terminus domain); the interaction reduces the binding between BAD and BAX. Interacts with GIMAP3/IAN4 and GIMAP5/IAN5. Post-translationally, phosphorylated on one or more of Ser-75, Ser-99, Ser-118 and Ser-134 in response to survival stimuli, which blocks its pro-apoptotic activity. Phosphorylation on Ser-99 or Ser-75 promotes heterodimerization with 14-3-3 proteins. This interaction then facilitates the phosphorylation at Ser-118, a site within the BH3 motif, leading to the release of Bcl-X(L) and the promotion of cell survival. Ser-99 is the major site of AKT/PKB phosphorylation, Ser-118 the major site of protein kinase A (CAPK) phosphorylation. Phosphorylation at Ser-99 by PKB/AKT1 is almost completely blocked by the apoptotic C-terminus cleavage product of PKN2 generated by caspases-3 activity during apoptosis. Methylation at Arg-94 and Arg-96 by PRMT1 inhibits Akt-mediated phosphorylation at Ser-99. In terms of tissue distribution, expressed in a wide variety of tissues.

It localises to the mitochondrion outer membrane. It is found in the cytoplasm. In terms of biological role, promotes cell death. Successfully competes for the binding to Bcl-X(L), Bcl-2 and Bcl-W, thereby affecting the level of heterodimerization of these proteins with BAX. Can reverse the death repressor activity of Bcl-X(L), but not that of Bcl-2. Appears to act as a link between growth factor receptor signaling and the apoptotic pathways. The sequence is that of Bcl2-associated agonist of cell death (BAD) from Homo sapiens (Human).